The sequence spans 410 residues: tRNA-guanine(15) transglycosylase (410 aa).

D87 acts as the Nucleophile in catalysis. Positions 122 and 187 each coordinate substrate.

The protein belongs to the archaeosine tRNA-ribosyltransferase family. Requires Zn(2+) as cofactor.

The catalysed reaction is guanosine(15) in tRNA + 7-cyano-7-deazaguanine = 7-cyano-7-carbaguanosine(15) in tRNA + guanine. It participates in tRNA modification; archaeosine-tRNA biosynthesis. In terms of biological role, exchanges the guanine residue with 7-cyano-7-deazaguanine (preQ0) at position 15 in the dihydrouridine loop (D-loop) of archaeal tRNAs. The sequence is that of tRNA-guanine(15) transglycosylase from Nanoarchaeum equitans (strain Kin4-M).